We begin with the raw amino-acid sequence, 308 residues long: Homoserine kinase (308 aa).

Position 95-105 (95-105 (PQSRGLGSSAA)) interacts with ATP.

This sequence belongs to the GHMP kinase family. Homoserine kinase subfamily.

Its subcellular location is the cytoplasm. The catalysed reaction is L-homoserine + ATP = O-phospho-L-homoserine + ADP + H(+). The protein operates within amino-acid biosynthesis; L-threonine biosynthesis; L-threonine from L-aspartate: step 4/5. Catalyzes the ATP-dependent phosphorylation of L-homoserine to L-homoserine phosphate. The chain is Homoserine kinase from Corynebacterium jeikeium (strain K411).